The sequence spans 183 residues: Probable adenylyl-sulfate kinase (183 aa).

Residue 17–24 (GLPGSGKT) coordinates ATP. Residue Ser91 is the Phosphoserine intermediate of the active site.

This sequence belongs to the APS kinase family.

It catalyses the reaction adenosine 5'-phosphosulfate + ATP = 3'-phosphoadenylyl sulfate + ADP + H(+). It participates in sulfur metabolism; hydrogen sulfide biosynthesis; sulfite from sulfate: step 2/3. Catalyzes the synthesis of activated sulfate. The sequence is that of Probable adenylyl-sulfate kinase (cysC) from Aeropyrum pernix (strain ATCC 700893 / DSM 11879 / JCM 9820 / NBRC 100138 / K1).